Reading from the N-terminus, the 257-residue chain is Protein patched homolog 1 (257 aa).

The Extracellular portion of the chain corresponds to 1 to 199; the sequence is AKLQTGTAYL…LDDILKSFSD (199 aa). Residues N75, N114, and N177 are each glycosylated (N-linked (GlcNAc...) asparagine). A helical transmembrane segment spans residues 200–220; that stretch reads ISVIRVASGYLLMLAYACLTM. The SSD domain maps to 201 to 257; it reads SVIRVASGYLLMLAYACLTMLRWDCAKSQGAVGLAGVLLVALSVAAGLGLCSLIGIS. The Cytoplasmic portion of the chain corresponds to 221–235; it reads LRWDCAKSQGAVGLA. The chain crosses the membrane as a helical span at residues 236 to 256; it reads GVLLVALSVAAGLGLCSLIGI.

It belongs to the patched family. Post-translationally, glycosylation is necessary for SHH binding. In terms of tissue distribution, in the eye, detected in neural retina, iris, retinal pigment epithelium, but not in lens.

The protein localises to the membrane. Acts as a receptor for sonic hedgehog (SHH), indian hedgehog (IHH) and desert hedgehog (DHH). Associates with the smoothened protein (SMO) to transduce the hedgehog's proteins signal. The sequence is that of Protein patched homolog 1 (PTC1) from Cynops pyrrhogaster (Japanese fire-bellied newt).